Consider the following 158-residue polypeptide: MSSKEQEAQKGKQGWITPTVIPPEEWATFRYRGKTLEELLNMSMDEFIKLLPARQRRSLKRGLKPEHRKLLEKIRKAKRLAAQGKKVVIRTHCRDMIILPEMVGLTIHVYNGITYIPVFISPWHIGHYLGEFALTTKIVQHGEPGLKATRSSLHIAAK.

It belongs to the universal ribosomal protein uS19 family.

Functionally, protein S19 forms a complex with S13 that binds strongly to the 16S ribosomal RNA. This is Small ribosomal subunit protein uS19 from Pyrobaculum aerophilum (strain ATCC 51768 / DSM 7523 / JCM 9630 / CIP 104966 / NBRC 100827 / IM2).